We begin with the raw amino-acid sequence, 287 residues long: ATP synthase gamma chain (287 aa).

Belongs to the ATPase gamma chain family. In terms of assembly, F-type ATPases have 2 components, CF(1) - the catalytic core - and CF(0) - the membrane proton channel. CF(1) has five subunits: alpha(3), beta(3), gamma(1), delta(1), epsilon(1). CF(0) has three main subunits: a, b and c.

Its subcellular location is the cell membrane. Its function is as follows. Produces ATP from ADP in the presence of a proton gradient across the membrane. The gamma chain is believed to be important in regulating ATPase activity and the flow of protons through the CF(0) complex. The sequence is that of ATP synthase gamma chain from Wolbachia sp. subsp. Drosophila simulans (strain wRi).